Consider the following 710-residue polypeptide: Phosphoribosylformylglycinamidine synthase subunit PurL (710 aa).

His36 is a catalytic residue. 2 residues coordinate ATP: Tyr39 and Lys80. Position 82 (Glu82) interacts with Mg(2+). Substrate-binding positions include 83–86 and Arg105; that span reads SHNH. The active-site Proton acceptor is His84. Residue Asp106 coordinates Mg(2+). Gln226 provides a ligand contact to substrate. Asp252 lines the Mg(2+) pocket. 294–296 is a substrate binding site; that stretch reads ETQ. Asp470 and Gly507 together coordinate ATP. Ser510 contacts substrate.

Belongs to the FGAMS family. As to quaternary structure, monomer. Part of the FGAM synthase complex composed of 1 PurL, 1 PurQ and 2 PurS subunits.

Its subcellular location is the cytoplasm. The catalysed reaction is N(2)-formyl-N(1)-(5-phospho-beta-D-ribosyl)glycinamide + L-glutamine + ATP + H2O = 2-formamido-N(1)-(5-O-phospho-beta-D-ribosyl)acetamidine + L-glutamate + ADP + phosphate + H(+). The protein operates within purine metabolism; IMP biosynthesis via de novo pathway; 5-amino-1-(5-phospho-D-ribosyl)imidazole from N(2)-formyl-N(1)-(5-phospho-D-ribosyl)glycinamide: step 1/2. Functionally, part of the phosphoribosylformylglycinamidine synthase complex involved in the purines biosynthetic pathway. Catalyzes the ATP-dependent conversion of formylglycinamide ribonucleotide (FGAR) and glutamine to yield formylglycinamidine ribonucleotide (FGAM) and glutamate. The FGAM synthase complex is composed of three subunits. PurQ produces an ammonia molecule by converting glutamine to glutamate. PurL transfers the ammonia molecule to FGAR to form FGAM in an ATP-dependent manner. PurS interacts with PurQ and PurL and is thought to assist in the transfer of the ammonia molecule from PurQ to PurL. In Sulfolobus acidocaldarius (strain ATCC 33909 / DSM 639 / JCM 8929 / NBRC 15157 / NCIMB 11770), this protein is Phosphoribosylformylglycinamidine synthase subunit PurL.